Here is a 93-residue protein sequence, read N- to C-terminus: Large ribosomal subunit protein bL36m (93 aa).

The N-terminal 35 residues, 1-35, are a transit peptide targeting the mitochondrion; sequence MFLQTLRLTMPRMFLHMKPSPITITRACTVPSLLS.

The protein belongs to the bacterial ribosomal protein bL36 family. As to quaternary structure, component of the mitochondrial large ribosomal subunit (mt-LSU). Mature yeast 74S mitochondrial ribosomes consist of a small (37S) and a large (54S) subunit. The 37S small subunit contains a 15S ribosomal RNA (15S mt-rRNA) and 34 different proteins. The 54S large subunit contains a 21S rRNA (21S mt-rRNA) and 46 different proteins. bL36m has a zinc binding site.

Its subcellular location is the mitochondrion. Functionally, component of the mitochondrial ribosome (mitoribosome), a dedicated translation machinery responsible for the synthesis of mitochondrial genome-encoded proteins, including at least some of the essential transmembrane subunits of the mitochondrial respiratory chain. The mitoribosomes are attached to the mitochondrial inner membrane and translation products are cotranslationally integrated into the membrane. bL36m may be involved in a process influencing telomere capping. This is Large ribosomal subunit protein bL36m (RTC6) from Saccharomyces cerevisiae (strain ATCC 204508 / S288c) (Baker's yeast).